Reading from the N-terminus, the 66-residue chain is Opicalcin-2 (66 aa).

The first 22 residues, 1–22 (MKPSLIIVTFIVVFMTISCVAA), serve as a signal peptide directing secretion. A propeptide spanning residues 23–31 (DDEQETWIE) is cleaved from the precursor. 3 disulfide bridges follow: Cys-36-Cys-50, Cys-43-Cys-54, and Cys-49-Cys-65. Residues 55-57 (KRR) form an essential for stimulation of [3H]ryanodine binding to RYR1 region.

Belongs to the scorpion calcin family. Expressed by the venom gland.

Its subcellular location is the secreted. Its function is as follows. This toxin stabilizes ryanodine receptor 1 (RyR1) opening in a long-lasting subconductance state (40% of the full conductance state). Furthermore, it triggers calcium release from sarcoplasmic vesicles (64.2 nM are enough to induce a sharp release, and 50% of the total calcium is released after toxin (100 nM) addition) probably by acting as a cell-penetrating peptide (CPP). In addition, it has been shown to dose-dependently stimulate ryanodine binding to RyR1 (EC(50)=3.2 nM). It also augments the bell-shaped calcium-[3H]ryanodine binding curve that is maximal at about 10 uM calcium concentration. It binds a different site as ryanodine. It acts synergistically with caffeine. In vivo, intracerebroventricular injection into mice induces neurotoxic symptoms, followed by death. The chain is Opicalcin-2 from Opistophthalmus carinatus (African yellow leg scorpion).